A 77-amino-acid chain; its full sequence is Translation initiation factor IF-1, chloroplastic (77 aa).

The region spanning 1-71 (MKEQKWIHEG…TRGRIIYRLR (71 aa)) is the S1-like domain.

This sequence belongs to the IF-1 family. Component of the 30S ribosomal translation pre-initiation complex which assembles on the 30S ribosome in the order IF-2 and IF-3, IF-1 and N-formylmethionyl-tRNA(fMet); mRNA recruitment can occur at any time during PIC assembly.

It localises to the plastid. The protein resides in the chloroplast. One of the essential components for the initiation of protein synthesis. Stabilizes the binding of IF-2 and IF-3 on the 30S subunit to which N-formylmethionyl-tRNA(fMet) subsequently binds. Helps modulate mRNA selection, yielding the 30S pre-initiation complex (PIC). Upon addition of the 50S ribosomal subunit IF-1, IF-2 and IF-3 are released leaving the mature 70S translation initiation complex. This chain is Translation initiation factor IF-1, chloroplastic, found in Daucus carota (Wild carrot).